The primary structure comprises 186 residues: Ribosome-recycling factor (186 aa).

The segment at 135–164 (DGMDDLKKAEKDGEIGQDESRAQSERVQKM) is disordered.

It belongs to the RRF family.

The protein resides in the cytoplasm. Its function is as follows. Responsible for the release of ribosomes from messenger RNA at the termination of protein biosynthesis. May increase the efficiency of translation by recycling ribosomes from one round of translation to another. This Rhizobium meliloti (strain 1021) (Ensifer meliloti) protein is Ribosome-recycling factor.